The sequence spans 810 residues: Hemoglobin-haptoglobin utilization protein B (810 aa).

The signal sequence occupies residues 1–22 (MPIPFKPVLAVAAIAQAFPAFA). The TBDR plug domain occupies 34 to 166 (NEITVTGTHK…LGGAVNYQTK (133 aa)). The TBDR beta-barrel domain occupies 175 to 810 (DKPYHLGIKG…SYNFTIEAKF (636 aa)). The TonB C-terminal box signature appears at 793–810 (QRFTSPGRSYNFTIEAKF).

Belongs to the TonB-dependent receptor family.

The protein localises to the cell outer membrane. Acts as a receptor for hemoglobin or the hemoglobin/haptoglobin complex and is required for heme uptake. This Neisseria meningitidis serogroup C protein is Hemoglobin-haptoglobin utilization protein B (hpuB).